Here is a 103-residue protein sequence, read N- to C-terminus: Putative membrane protein insertion efficiency factor (103 aa).

The protein belongs to the UPF0161 family.

It is found in the cell inner membrane. In terms of biological role, could be involved in insertion of integral membrane proteins into the membrane. This is Putative membrane protein insertion efficiency factor from Chlamydia caviae (strain ATCC VR-813 / DSM 19441 / 03DC25 / GPIC) (Chlamydophila caviae).